A 211-amino-acid polypeptide reads, in one-letter code: Ferritin heavy chain (211 aa).

Positions 1–20 are cleaved as a signal peptide; it reads MNSILLVFAGILAVCLPASA. Positions 35 to 191 constitute a Ferritin-like diiron domain; that stretch reads ITMHRSCRNS…GKASTLKKLM (157 aa). A disulfide bridge connects residues Cys41 and Cys150. Residues Glu52, Glu87, His90, Glu136, and Gln173 each contribute to the Fe cation site.

This sequence belongs to the ferritin family. As to quaternary structure, oligomer of 12 light (L) chains and 12 heavy (H) chains; L and H chains are disulfide-linked. The functional molecule forms a roughly spherical shell with a diameter of 12 nm and contains a central cavity into which the insoluble ferric iron core is deposited.

It localises to the golgi apparatus. The protein localises to the secreted. It carries out the reaction 4 Fe(2+) + O2 + 4 H(+) = 4 Fe(3+) + 2 H2O. Functionally, stores iron in a soluble, non-toxic, readily available form. Important for iron homeostasis. Iron is taken up in the ferrous form and deposited as ferric hydroxides after oxidation. Ferritin is composed of a heavy (H) chain which is responsible for the oxidation and uptake of ferrous iron, and a light (L) chain which facilitates the nucleation of the ferrihydrite iron core. The protein is Ferritin heavy chain of Trichoplusia ni (Cabbage looper).